A 282-amino-acid chain; its full sequence is Phosphate import ATP-binding protein PstB (282 aa).

The tract at residues 1–33 (MNMAETQLNPIARPTAPAGFDPAQSGQSQAPSR) is disordered. The ABC transporter domain maps to 36-277 (IEINDLNFFY…PVRKETEDYI (242 aa)). 68 to 75 (GPSGCGKS) contributes to the ATP binding site.

Belongs to the ABC transporter superfamily. Phosphate importer (TC 3.A.1.7) family. The complex is composed of two ATP-binding proteins (PstB), two transmembrane proteins (PstC and PstA) and a solute-binding protein (PstS).

Its subcellular location is the cell inner membrane. It catalyses the reaction phosphate(out) + ATP + H2O = ADP + 2 phosphate(in) + H(+). In terms of biological role, part of the ABC transporter complex PstSACB involved in phosphate import. Responsible for energy coupling to the transport system. This Paraburkholderia xenovorans (strain LB400) protein is Phosphate import ATP-binding protein PstB.